Consider the following 181-residue polypeptide: Large ribosomal subunit protein uL5 (181 aa).

It belongs to the universal ribosomal protein uL5 family. Part of the 50S ribosomal subunit; part of the 5S rRNA/L5/L18/L25 subcomplex. Contacts the 5S rRNA and the P site tRNA. Forms a bridge to the 30S subunit in the 70S ribosome.

In terms of biological role, this is one of the proteins that bind and probably mediate the attachment of the 5S RNA into the large ribosomal subunit, where it forms part of the central protuberance. In the 70S ribosome it contacts protein S13 of the 30S subunit (bridge B1b), connecting the 2 subunits; this bridge is implicated in subunit movement. Contacts the P site tRNA; the 5S rRNA and some of its associated proteins might help stabilize positioning of ribosome-bound tRNAs. This chain is Large ribosomal subunit protein uL5, found in Campylobacter hominis (strain ATCC BAA-381 / DSM 21671 / CCUG 45161 / LMG 19568 / NCTC 13146 / CH001A).